Reading from the N-terminus, the 454-residue chain is 5-hydroxytryptamine receptor 3D (454 aa).

Positions 1–24 are cleaved as a signal peptide; it reads MQKHSPGPPALALLSQSLLTTGNG. Over 25-232 the chain is Extracellular; it reads DTLIINCPGF…IRRRCRPSPY (208 aa). N-linked (GlcNAc...) asparagine glycosylation occurs at N66. A helical transmembrane segment spans residues 233–253; that stretch reads VVNFLVPSGILIAIDALSFYL. Over 254–264 the chain is Cytoplasmic; that stretch reads PLESGNCAPFK. A helical membrane pass occupies residues 265–285; sequence MTVLLGYSVFLLMMNDLLPAT. Over 286 to 306 the chain is Extracellular; it reads STSSHASLVAPLALMQTPLPA. A helical transmembrane segment spans residues 307 to 327; it reads GVYFALCLSLMVGSLLETIFI. At 328–431 the chain is on the cytoplasmic side; the sequence is THLLHVATTQ…WVQFSHAMDA (104 aa). The tract at residues 363–410 is disordered; the sequence is PQKGNKGPGLTPTHLPGVKEPEVSAGQMPGPGEAELTGGSEWTRAQRE. The HA-stretch; determines single-channel conductance in 5-HT3 receptors stretch occupies residues 399 to 430; the sequence is TGGSEWTRAQREHEAQKQHSVELWVQFSHAMD. The chain crosses the membrane as a helical span at residues 432–452; the sequence is LLFRLYLLFMASSIITVICLW. The Extracellular segment spans residues 453–454; the sequence is NT.

The protein belongs to the ligand-gated ion channel (TC 1.A.9) family. 5-hydroxytryptamine receptor (TC 1.A.9.2) subfamily. HTR3D sub-subfamily. Forms homopentameric as well as heteropentameric serotonin-activated cation-selective channel complexes with HTR3A. The homomeric complex is not functional. Heteropentameric complexes display properties which resemble that of neuronal serotonin-activated channels in vivo. In terms of tissue distribution, expressed in liver, as well as fetal and adult colon and kidney.

The protein resides in the postsynaptic cell membrane. It is found in the cell membrane. It catalyses the reaction Na(+)(in) = Na(+)(out). It carries out the reaction K(+)(in) = K(+)(out). The enzyme catalyses Ca(2+)(in) = Ca(2+)(out). In terms of biological role, forms serotonin (5-hydroxytryptamine/5-HT3)-activated cation-selective channel complexes, which when activated cause fast, depolarizing responses in neurons. The protein is 5-hydroxytryptamine receptor 3D of Homo sapiens (Human).